The chain runs to 1064 residues: Carbamoyl phosphate synthase pyrimidine-specific large chain (1064 aa).

The interval 1 to 401 (MPKRRDIETI…SLLKAVRSLE (401 aa)) is carboxyphosphate synthetic domain. Positions 129, 169, 175, 176, 208, 210, 241, 242, 243, 284, and 298 each coordinate ATP. One can recognise an ATP-grasp 1 domain in the interval 133–327 (RALMNELGEP…IAKLAAKIAV (195 aa)). Residues Q284, E298, and N300 each coordinate Mg(2+). Positions 284, 298, and 300 each coordinate Mn(2+). Residues 402-546 (IGVHHLELNE…YSTYEEENES (145 aa)) form an oligomerization domain region. Residues 547-929 (IVTEKPSVIV…ALYKGLVASG (383 aa)) are carbamoyl phosphate synthetic domain. One can recognise an ATP-grasp 2 domain in the interval 671-861 (EQALSELGIP…MANLATKAIL (191 aa)). Residues R707, R746, I748, E752, G777, V778, H779, S780, Q820, and E832 each coordinate ATP. Mg(2+) contacts are provided by Q820, E832, and N834. Mn(2+) is bound by residues Q820, E832, and N834. An MGS-like domain is found at 930 to 1064 (IQIQPHGAVL…TAMTEGLVRS (135 aa)). Positions 930–1064 (IQIQPHGAVL…TAMTEGLVRS (135 aa)) are allosteric domain.

Belongs to the CarB family. In terms of assembly, composed of two chains; the small (or glutamine) chain promotes the hydrolysis of glutamine to ammonia, which is used by the large (or ammonia) chain to synthesize carbamoyl phosphate. Tetramer of heterodimers (alpha,beta)4. It depends on Mg(2+) as a cofactor. The cofactor is Mn(2+).

It carries out the reaction hydrogencarbonate + L-glutamine + 2 ATP + H2O = carbamoyl phosphate + L-glutamate + 2 ADP + phosphate + 2 H(+). The catalysed reaction is hydrogencarbonate + NH4(+) + 2 ATP = carbamoyl phosphate + 2 ADP + phosphate + 2 H(+). Its pathway is amino-acid biosynthesis; L-arginine biosynthesis; carbamoyl phosphate from bicarbonate: step 1/1. The protein operates within pyrimidine metabolism; UMP biosynthesis via de novo pathway; (S)-dihydroorotate from bicarbonate: step 1/3. In terms of biological role, small subunit of the glutamine-dependent carbamoyl phosphate synthetase (CPSase). CPSase catalyzes the formation of carbamoyl phosphate from the ammonia moiety of glutamine, carbonate, and phosphate donated by ATP, constituting the first step of the biosynthetic pathway leading to pyrimidine nucleotides. The large subunit (synthetase) binds the substrates ammonia (free or transferred from glutamine from the small subunit), hydrogencarbonate and ATP and carries out an ATP-coupled ligase reaction, activating hydrogencarbonate by forming carboxy phosphate which reacts with ammonia to form carbamoyl phosphate. The protein is Carbamoyl phosphate synthase pyrimidine-specific large chain (pyrAB) of Geobacillus stearothermophilus (Bacillus stearothermophilus).